A 400-amino-acid polypeptide reads, in one-letter code: Queuine tRNA-ribosyltransferase catalytic subunit (400 aa).

Asp-89 acts as the Proton acceptor in catalysis. Substrate is bound by residues 89-93 (DSGGF), Asp-143, Gln-185, and Gly-212. The segment at 243–249 (GVGFPVD) is RNA binding. Residue Asp-262 is the Nucleophile of the active site. An RNA binding; important for wobble base 34 recognition region spans residues 267–271 (TRTAR). Zn(2+) is bound by residues Cys-301, Cys-303, Cys-306, and His-331.

Belongs to the queuine tRNA-ribosyltransferase family. As to quaternary structure, heterodimer of a catalytic subunit and an accessory subunit. It depends on Zn(2+) as a cofactor.

The protein localises to the cytoplasm. The enzyme catalyses guanosine(34) in tRNA + queuine = queuosine(34) in tRNA + guanine. In terms of biological role, catalytic subunit of the queuine tRNA-ribosyltransferase (TGT) that catalyzes the base-exchange of a guanine (G) residue with queuine (Q) at position 34 (anticodon wobble position) in tRNAs with GU(N) anticodons (tRNA-Asp, -Asn, -His and -Tyr), resulting in the hypermodified nucleoside queuosine (7-(((4,5-cis-dihydroxy-2-cyclopenten-1-yl)amino)methyl)-7-deazaguanosine). Catalysis occurs through a double-displacement mechanism. The nucleophile active site attacks the C1' of nucleotide 34 to detach the guanine base from the RNA, forming a covalent enzyme-RNA intermediate. The proton acceptor active site deprotonates the incoming queuine, allowing a nucleophilic attack on the C1' of the ribose to form the product. The polypeptide is Queuine tRNA-ribosyltransferase catalytic subunit (Caenorhabditis elegans).